The following is a 317-amino-acid chain: Transaldolase (317 aa).

Lys-126 acts as the Schiff-base intermediate with substrate in catalysis.

The protein belongs to the transaldolase family. Type 1 subfamily. As to quaternary structure, homodimer.

Its subcellular location is the cytoplasm. The catalysed reaction is D-sedoheptulose 7-phosphate + D-glyceraldehyde 3-phosphate = D-erythrose 4-phosphate + beta-D-fructose 6-phosphate. It participates in carbohydrate degradation; pentose phosphate pathway; D-glyceraldehyde 3-phosphate and beta-D-fructose 6-phosphate from D-ribose 5-phosphate and D-xylulose 5-phosphate (non-oxidative stage): step 2/3. Transaldolase is important for the balance of metabolites in the pentose-phosphate pathway. The sequence is that of Transaldolase from Burkholderia mallei (strain SAVP1).